The following is a 783-amino-acid chain: Protein transport protein SEC23 B (783 aa).

Zn(2+)-binding residues include Cys59, Cys62, Cys81, and Cys84. The interval 59–84 is zinc finger-like; it reads CRICTAALNPFARVDFLAKIWICPIC.

Belongs to the SEC23/SEC24 family. SEC23 subfamily. Component of the coat protein complex II (COPII), composed of at least five proteins: the Sec23/24 complex, the Sec13/31 complex and Sar1. Interacts with SEC24A.

It localises to the cytoplasmic vesicle. The protein localises to the COPII-coated vesicle membrane. Its subcellular location is the endoplasmic reticulum membrane. It is found in the membrane. In terms of biological role, component of the coat protein complex II (COPII) which promotes the formation of transport vesicles from the endoplasmic reticulum (ER). The coat has two main functions, the physical deformation of the endoplasmic reticulum membrane into vesicles and the selection of cargo molecules. The protein is Protein transport protein SEC23 B of Arabidopsis thaliana (Mouse-ear cress).